The sequence spans 167 residues: Insertion element IS1 protein InsB (167 aa).

Belongs to the transposase 27 family.

Functionally, absolutely required for transposition of IS1. The protein is Insertion element IS1 protein InsB (insB) of Escherichia coli.